The sequence spans 433 residues: Enolase (433 aa).

Gln-167 is a (2R)-2-phosphoglycerate binding site. The Proton donor role is filled by Glu-209. Residues Asp-246, Glu-291, and Asp-318 each coordinate Mg(2+). Residues Lys-343, Arg-372, Ser-373, and Lys-394 each contribute to the (2R)-2-phosphoglycerate site. The active-site Proton acceptor is Lys-343.

It belongs to the enolase family. As to quaternary structure, component of the RNA degradosome, a multiprotein complex involved in RNA processing and mRNA degradation. The cofactor is Mg(2+).

It localises to the cytoplasm. It is found in the secreted. Its subcellular location is the cell surface. The enzyme catalyses (2R)-2-phosphoglycerate = phosphoenolpyruvate + H2O. The protein operates within carbohydrate degradation; glycolysis; pyruvate from D-glyceraldehyde 3-phosphate: step 4/5. Catalyzes the reversible conversion of 2-phosphoglycerate (2-PG) into phosphoenolpyruvate (PEP). It is essential for the degradation of carbohydrates via glycolysis. This Vibrio vulnificus (strain YJ016) protein is Enolase.